Consider the following 560-residue polypeptide: Serine palmitoyltransferase 2 (560 aa).

A helical transmembrane segment spans residues 65-85 (PMLVAVLTYVGYGVLTLFGYL). The residue at position 377 (K377) is an N6-(pyridoxal phosphate)lysine.

It belongs to the class-II pyridoxal-phosphate-dependent aminotransferase family. Component of the serine palmitoyltransferase (SPT) complex, which is composed of SPTLC1, SPTLC2 or SPTLC3 and SPTSSA or SPTSSB. The heterodimer consisting of SPTLC1 and SPTLC2/SPTLC3 forms the catalytic core of the enzyme, while SPTSSA or SPTSSB subunits determine substrate specificity. SPT also interacts with ORMDL proteins, especially ORMDL3, which negatively regulate SPT activity in the presence of ceramides. Forms dimers of heterodimers with SPTLC1. The cofactor is pyridoxal 5'-phosphate. As to expression, expressed in a variety of tissues. Expressed in brains cortices (at protein level). Expressed in brown and white adipose tissues. Expressed in liver.

The protein resides in the endoplasmic reticulum membrane. The catalysed reaction is L-serine + hexadecanoyl-CoA + H(+) = 3-oxosphinganine + CO2 + CoA. It catalyses the reaction octadecanoyl-CoA + L-serine + H(+) = 3-oxoeicosasphinganine + CO2 + CoA. It functions in the pathway lipid metabolism; sphingolipid metabolism. With respect to regulation, SPT complex catalytic activity is negatively regulated by ORMDL proteins, including ORMDL3, in the presence of ceramides. This mechanism allows to maintain ceramide levels at sufficient concentrations for the production of complex sphingolipids, but which prevents the accumulation of ceramides to levels that trigger apoptosis. Its function is as follows. Component of the serine palmitoyltransferase multisubunit enzyme (SPT) that catalyzes the initial and rate-limiting step in sphingolipid biosynthesis by condensing L-serine and activated acyl-CoA (most commonly palmitoyl-CoA) to form long-chain bases. The SPT complex is composed of SPTLC1, SPTLC2 or SPTLC3 and SPTSSA or SPTSSB. Within this complex, the heterodimer consisting of SPTLC1 and SPTLC2/SPTLC3 forms the catalytic core. The composition of the serine palmitoyltransferase (SPT) complex determines the substrate preference. The SPTLC1-SPTLC2-SPTSSA complex shows a strong preference for C16-CoA substrate, while the SPTLC1-SPTLC3-SPTSSA isozyme uses both C14-CoA and C16-CoA as substrates, with a slight preference for C14-CoA. The SPTLC1-SPTLC2-SPTSSB complex shows a strong preference for C18-CoA substrate, while the SPTLC1-SPTLC3-SPTSSB isozyme displays an ability to use a broader range of acyl-CoAs, without apparent preference. Crucial for adipogenesis. The sequence is that of Serine palmitoyltransferase 2 from Mus musculus (Mouse).